A 72-amino-acid polypeptide reads, in one-letter code: Beta-defensin 104A (72 aa).

The N-terminal stretch at 1 to 22 (MRRLVLLLAISLLLYQDLPVRS) is a signal peptide. Cystine bridges form between cysteine 30-cysteine 57, cysteine 37-cysteine 51, and cysteine 41-cysteine 58.

This sequence belongs to the beta-defensin family.

It localises to the secreted. Has antimicrobial activity. In Pongo pygmaeus (Bornean orangutan), this protein is Beta-defensin 104A (DEFB104A).